A 2289-amino-acid polypeptide reads, in one-letter code: DNA polymerase II large subunit (2289 aa).

Disordered regions lie at residues 279–330 (IGSD…SPRA) and 544–563 (SDTN…NTDD). Positions 292–304 (GEADIVKTDKDTN) are enriched in basic and acidic residues. The span at 305 to 318 (ESETEDGIDNDDYN) shows a compositional bias: acidic residues. The span at 544–557 (SDTNSASGNTSLRA) shows a compositional bias: polar residues. DOD-type homing endonuclease domains follow at residues 1222–1367 (LLGY…RLGI) and 1755–1911 (LLGQ…RLGV).

Belongs to the archaeal DNA polymerase II family. In terms of assembly, heterodimer of a large subunit and a small subunit. In terms of processing, this protein undergoes a protein self splicing that involves a post-translational excision of the intervening region (intein) followed by peptide ligation.

It carries out the reaction DNA(n) + a 2'-deoxyribonucleoside 5'-triphosphate = DNA(n+1) + diphosphate. It catalyses the reaction Exonucleolytic cleavage in the 3'- to 5'-direction to yield nucleoside 5'-phosphates.. Possesses two activities: a DNA synthesis (polymerase) and an exonucleolytic activity that degrades single-stranded DNA in the 3'- to 5'-direction. Has a template-primer preference which is characteristic of a replicative DNA polymerase. This Haloquadratum walsbyi (strain DSM 16790 / HBSQ001) protein is DNA polymerase II large subunit.